Consider the following 265-residue polypeptide: Photosystem II 22 kDa protein, chloroplastic (265 aa).

A chloroplast-targeting transit peptide spans 1 to 59; that stretch reads MAQTMLLTSGVTAGHFLRNKSPLAQPKVHHLFLSGNSPVALPSRRQSFVPLALFKPKTK. A run of 2 repeats spans residues 54-158 and 159-264. 4 consecutive transmembrane segments (helical) span residues 96-116, 130-150, 195-215, and 229-249; these read VAMI…KGIL, AEPL…GALG, LFVG…EIIT, and IPIQ…FFAA.

This sequence belongs to the ELIP/psbS family.

Its subcellular location is the plastid. The protein resides in the chloroplast thylakoid membrane. In terms of biological role, plays an important role in non-photochemical quenching (NPQ), a process maintains the balance between dissipation and utilization of light energy to minimize generation of oxidizing molecules, thereby protecting the plant against photo-oxidative damage; acts upstream of DLDG1. Is not necessary for efficient light harvesting and photosynthesis. This is Photosystem II 22 kDa protein, chloroplastic from Arabidopsis thaliana (Mouse-ear cress).